Reading from the N-terminus, the 127-residue chain is Large ribosomal subunit protein bL20 (127 aa).

Belongs to the bacterial ribosomal protein bL20 family.

Binds directly to 23S ribosomal RNA and is necessary for the in vitro assembly process of the 50S ribosomal subunit. It is not involved in the protein synthesizing functions of that subunit. The chain is Large ribosomal subunit protein bL20 (rplT) from Streptomyces coelicolor (strain ATCC BAA-471 / A3(2) / M145).